Reading from the N-terminus, the 182-residue chain is Early nodulin-like protein 10 (182 aa).

A signal peptide spans 1–20 (MSSVMMCCCLLLLFGLLSEG). A Phytocyanin domain is found at 21 to 125 (REILVGGKSN…GEKLRVVVLS (105 aa)). N-linked (GlcNAc...) asparagine glycosylation occurs at N65. C79 and C113 are disulfide-bonded. N-linked (GlcNAc...) asparagine glycans are attached at residues N129 and N148. N157 carries the GPI-anchor amidated asparagine lipid modification. Positions 158-182 (AHIMNKGSLNTAWSLLLLLPLGLLV) are cleaved as a propeptide — removed in mature form.

This sequence belongs to the early nodulin-like (ENODL) family. In terms of tissue distribution, mostly expressed in flowers, and, to a lower extent, in leaves, but barely in seedlings, stems, seeds and roots.

The protein localises to the cell membrane. Functionally, may act as a carbohydrate transporter. This Arabidopsis thaliana (Mouse-ear cress) protein is Early nodulin-like protein 10.